The sequence spans 437 residues: GTPase Obg (437 aa).

The Obg domain occupies 2–160 (SMFLDTAKIS…RQLELELKIL (159 aa)). Positions 161 to 338 (ADVGLVGFPS…LLEATAELLA (178 aa)) constitute an OBG-type G domain. Residues 167–174 (GFPSVGKS), 192–196 (FTTIV), 214–217 (DLPG), 284–287 (NKMD), and 319–321 (SSL) contribute to the GTP site. S174 and T194 together coordinate Mg(2+). The OCT domain occupies 359-437 (GFAETEKDFE…IGKFEFEFVD (79 aa)).

This sequence belongs to the TRAFAC class OBG-HflX-like GTPase superfamily. OBG GTPase family. Monomer. Requires Mg(2+) as cofactor.

Its subcellular location is the cytoplasm. An essential GTPase which binds GTP, GDP and possibly (p)ppGpp with moderate affinity, with high nucleotide exchange rates and a fairly low GTP hydrolysis rate. Plays a role in control of the cell cycle, stress response, ribosome biogenesis and in those bacteria that undergo differentiation, in morphogenesis control. The protein is GTPase Obg of Streptococcus pyogenes serotype M5 (strain Manfredo).